Here is a 299-residue protein sequence, read N- to C-terminus: Protease HtpX homolog (299 aa).

The next 2 helical transmembrane spans lie at 15–35 (ILLL…GYLF) and 39–59 (GLGG…SMIF). H143 is a Zn(2+) binding site. Residue E144 is part of the active site. H147 is a Zn(2+) binding site. The next 2 helical transmembrane spans lie at 158 to 178 (IAVA…RMMW) and 198 to 218 (IIML…ATLV). E227 contributes to the Zn(2+) binding site.

Belongs to the peptidase M48B family. It depends on Zn(2+) as a cofactor.

It localises to the cell membrane. The chain is Protease HtpX homolog from Streptococcus pneumoniae (strain Hungary19A-6).